Reading from the N-terminus, the 82-residue chain is ATP synthase subunit c, chloroplastic (82 aa).

A run of 2 helical transmembrane segments spans residues 4–24 (IISA…AIGP) and 57–77 (LAFM…LLFA).

The protein belongs to the ATPase C chain family. F-type ATPases have 2 components, F(1) - the catalytic core - and F(0) - the membrane proton channel. F(1) has five subunits: alpha(3), beta(3), gamma(1), delta(1), epsilon(1). F(0) has four main subunits: a(1), b(1), b'(1) and c(10-14). The alpha and beta chains form an alternating ring which encloses part of the gamma chain. F(1) is attached to F(0) by a central stalk formed by the gamma and epsilon chains, while a peripheral stalk is formed by the delta, b and b' chains.

The protein resides in the plastid. The protein localises to the chloroplast thylakoid membrane. Its function is as follows. F(1)F(0) ATP synthase produces ATP from ADP in the presence of a proton or sodium gradient. F-type ATPases consist of two structural domains, F(1) containing the extramembraneous catalytic core and F(0) containing the membrane proton channel, linked together by a central stalk and a peripheral stalk. During catalysis, ATP synthesis in the catalytic domain of F(1) is coupled via a rotary mechanism of the central stalk subunits to proton translocation. Key component of the F(0) channel; it plays a direct role in translocation across the membrane. A homomeric c-ring of between 10-14 subunits forms the central stalk rotor element with the F(1) delta and epsilon subunits. In Thalassiosira pseudonana (Marine diatom), this protein is ATP synthase subunit c, chloroplastic.